The following is a 422-amino-acid chain: MSKKIQAIRGMNDLLPKNSALWLSLEKTIFDLFITYGYQNIRTPIVEKTDTFCRAIGGDTDIVEKEMYSWKETSGESLSLRPEGTAGCVRMMIEHNLPRESIQKVFYQGAMFRHERPQKGRYRQFHQVGLEIFGVFNAKADAELMIIMHALWQTIGLKNIVLEINTLGSNEVRNAYRKILVAYFNQHKNQLNEDGLKQLKTNPFRILDSKNKAIHSLISDAPKLMDYLDKKSIQHFKQFKSYLDALNITYVINTSLVRGLDYYNRTVFEWTTTDLGTQSTICAGGRYDGLIEKMGGTPTPAVGLAIGLERLVLLLEAQNLISTKSTLSIYLIAFGKKEQIKSIQIANVLHDELPNVILYNDLTLGSFKSQFEKADKAKANFALILGEQELNNNQISIKPLRNQGTQQTMNLEEAIKYFKENQ.

Belongs to the class-II aminoacyl-tRNA synthetase family. In terms of assembly, homodimer.

Its subcellular location is the cytoplasm. The catalysed reaction is tRNA(His) + L-histidine + ATP = L-histidyl-tRNA(His) + AMP + diphosphate + H(+). This chain is Histidine--tRNA ligase, found in Vesicomyosocius okutanii subsp. Calyptogena okutanii (strain HA).